The sequence spans 220 residues: NAD(P)H-hydrate epimerase (220 aa).

A YjeF N-terminal domain is found at 6–203 (ARHLTTLATG…SFDLPEALFH (198 aa)). 53-57 (HNGGV) serves as a coordination point for (6S)-NADPHX. Residues Asn-54 and Asp-116 each coordinate K(+). Residues 120–126 (GMRLEGP) and Asp-149 contribute to the (6S)-NADPHX site. A K(+)-binding site is contributed by Thr-152.

It belongs to the NnrE/AIBP family. K(+) is required as a cofactor.

The enzyme catalyses (6R)-NADHX = (6S)-NADHX. It catalyses the reaction (6R)-NADPHX = (6S)-NADPHX. Functionally, catalyzes the epimerization of the S- and R-forms of NAD(P)HX, a damaged form of NAD(P)H that is a result of enzymatic or heat-dependent hydration. This is a prerequisite for the S-specific NAD(P)H-hydrate dehydratase to allow the repair of both epimers of NAD(P)HX. This chain is NAD(P)H-hydrate epimerase, found in Truepera radiovictrix (strain DSM 17093 / CIP 108686 / LMG 22925 / RQ-24).